The sequence spans 292 residues: Ubiquinone biosynthesis protein UbiV (292 aa).

Residues C39, C180, C193, and C197 each coordinate [4Fe-4S] cluster.

Belongs to the peptidase U32 family. UbiV subfamily. Forms a heterodimer with UbiU. [4Fe-4S] cluster is required as a cofactor.

It participates in cofactor biosynthesis; ubiquinone biosynthesis. Its function is as follows. Required for O(2)-independent ubiquinone (coenzyme Q) biosynthesis. Together with UbiU, is essential for the C6-hydroxylation reaction in the oxygen-independent ubiquinone biosynthesis pathway. This Escherichia coli (strain K12) protein is Ubiquinone biosynthesis protein UbiV.